The sequence spans 525 residues: GMP synthase [glutamine-hydrolyzing] (525 aa).

Residues 9–207 (RILILDFGSQ…VRDICQCEAL (199 aa)) enclose the Glutamine amidotransferase type-1 domain. Cys-86 serves as the catalytic Nucleophile. Residues His-181 and Glu-183 contribute to the active site. Residues 208 to 400 (WTPAKIIDDA…LGLPYDMLYR (193 aa)) enclose the GMPS ATP-PPase domain. An ATP-binding site is contributed by 235–241 (SGGVDSS).

In terms of assembly, homodimer.

It catalyses the reaction XMP + L-glutamine + ATP + H2O = GMP + L-glutamate + AMP + diphosphate + 2 H(+). It functions in the pathway purine metabolism; GMP biosynthesis; GMP from XMP (L-Gln route): step 1/1. Catalyzes the synthesis of GMP from XMP. The sequence is that of GMP synthase [glutamine-hydrolyzing] from Klebsiella pneumoniae (strain 342).